The primary structure comprises 212 residues: Large ribosomal subunit protein bL25 (212 aa).

Residues 183–212 (HDLPVASIHKPKGAKADDAEGEEGEEGGEE) are disordered. Over residues 201 to 212 (AEGEEGEEGGEE) the composition is skewed to acidic residues.

This sequence belongs to the bacterial ribosomal protein bL25 family. CTC subfamily. Part of the 50S ribosomal subunit; part of the 5S rRNA/L5/L18/L25 subcomplex. Contacts the 5S rRNA. Binds to the 5S rRNA independently of L5 and L18.

Its function is as follows. This is one of the proteins that binds to the 5S RNA in the ribosome where it forms part of the central protuberance. This chain is Large ribosomal subunit protein bL25, found in Marinobacter nauticus (strain ATCC 700491 / DSM 11845 / VT8) (Marinobacter aquaeolei).